The sequence spans 542 residues: Excitatory amino acid transporter 1 (542 aa).

Over Met-1 to Arg-47 the chain is Cytoplasmic. A helical membrane pass occupies residues Asn-48 to Leu-68. Residues Arg-69–Glu-86 lie on the Extracellular side of the membrane. The helical transmembrane segment at Leu-87–Met-108 threads the bilayer. Residues Ala-109–Arg-122 lie on the Cytoplasmic side of the membrane. The helical transmembrane segment at Ala-123 to Ile-145 threads the bilayer. Over His-146–Gly-236 the chain is Extracellular. Residues Ser-237–Met-260 form a helical membrane-spanning segment. Residues Lys-261 to Glu-269 lie on the Cytoplasmic side of the membrane. A helical membrane pass occupies residues Phe-270–Ile-297. The Extracellular segment spans residues Ala-298–Thr-318. Residues Val-319–Val-340 form a helical membrane-spanning segment. Over Thr-341–Pro-345 the chain is Cytoplasmic. Residues Trp-346 to Leu-376 constitute an intramembrane region (discontinuously helical). Ser-363 to Ser-365 is a binding site for L-aspartate. Over Glu-377–Arg-385 the chain is Cytoplasmic. A helical transmembrane segment spans residues Val-386–Phe-412. Na(+) contacts are provided by Gly-394, Thr-396, and Asn-398. Thr-402 contributes to the L-aspartate binding site. The Extracellular portion of the chain corresponds to Ile-413–Gln-425. Residues Ile-426 to Gly-459 constitute an intramembrane region (discontinuously helical). Residue Ile-443–Gly-447 coordinates L-aspartate. Over Leu-460 to Asp-472 the chain is Extracellular. The chain crosses the membrane as a helical span at residues Trp-473–Val-494. L-aspartate contacts are provided by Asp-476 and Asn-483. Asn-483 and Asp-487 together coordinate Na(+). Over Glu-495 to Met-542 the chain is Cytoplasmic. Ser-512 carries the post-translational modification Phosphoserine.

Belongs to the dicarboxylate/amino acid:cation symporter (DAACS) (TC 2.A.23) family. SLC1A3 subfamily. In terms of assembly, homotrimer. Post-translationally, glycosylated. In terms of tissue distribution, detected in brain. Detected at very much lower levels in heart, lung, placenta and skeletal muscle. Highly expressed in cerebellum, but also found in frontal cortex, hippocampus and basal ganglia.

The protein resides in the cell membrane. The enzyme catalyses K(+)(in) + L-glutamate(out) + 3 Na(+)(out) + H(+)(out) = K(+)(out) + L-glutamate(in) + 3 Na(+)(in) + H(+)(in). It catalyses the reaction K(+)(in) + L-aspartate(out) + 3 Na(+)(out) + H(+)(out) = K(+)(out) + L-aspartate(in) + 3 Na(+)(in) + H(+)(in). The catalysed reaction is D-aspartate(out) + K(+)(in) + 3 Na(+)(out) + H(+)(out) = D-aspartate(in) + K(+)(out) + 3 Na(+)(in) + H(+)(in). In terms of biological role, sodium-dependent, high-affinity amino acid transporter that mediates the uptake of L-glutamate and also L-aspartate and D-aspartate. Functions as a symporter that transports one amino acid molecule together with two or three Na(+) ions and one proton, in parallel with the counter-transport of one K(+) ion. Mediates Cl(-) flux that is not coupled to amino acid transport; this avoids the accumulation of negative charges due to aspartate and Na(+) symport. Plays a redundant role in the rapid removal of released glutamate from the synaptic cleft, which is essential for terminating the postsynaptic action of glutamate. The polypeptide is Excitatory amino acid transporter 1 (Homo sapiens (Human)).